The sequence spans 118 residues: Small ribosomal subunit protein uS13 (118 aa).

The tract at residues 94-118 (GLPVRGQRTKTNARTRKGPRKPIKK) is disordered.

Belongs to the universal ribosomal protein uS13 family. In terms of assembly, part of the 30S ribosomal subunit. Forms a loose heterodimer with protein S19. Forms two bridges to the 50S subunit in the 70S ribosome.

Located at the top of the head of the 30S subunit, it contacts several helices of the 16S rRNA. In the 70S ribosome it contacts the 23S rRNA (bridge B1a) and protein L5 of the 50S subunit (bridge B1b), connecting the 2 subunits; these bridges are implicated in subunit movement. Contacts the tRNAs in the A and P-sites. The polypeptide is Small ribosomal subunit protein uS13 (Edwardsiella ictaluri (strain 93-146)).